A 118-amino-acid polypeptide reads, in one-letter code: SPbeta prophage-derived uncharacterized protein YomS (118 aa).

This Bacillus subtilis (strain 168) protein is SPbeta prophage-derived uncharacterized protein YomS (yomS).